Consider the following 351-residue polypeptide: GTP 3',8-cyclase (351 aa).

Residues 29–254 (RFGRVARDLR…EHGREDPSAP (226 aa)) form the Radical SAM core domain. Arg38 is a GTP binding site. Residues Cys45 and Cys49 each coordinate [4Fe-4S] cluster. Tyr51 provides a ligand contact to S-adenosyl-L-methionine. Cys52 is a [4Fe-4S] cluster binding site. Arg89 contacts GTP. S-adenosyl-L-methionine is bound at residue Gly93. GTP is bound at residue Thr120. Ser144 provides a ligand contact to S-adenosyl-L-methionine. Lys181 serves as a coordination point for GTP. Met214 serves as a coordination point for S-adenosyl-L-methionine. [4Fe-4S] cluster contacts are provided by Cys278 and Cys281. 283–285 (RTR) is a binding site for GTP. Residue Cys295 participates in [4Fe-4S] cluster binding.

It belongs to the radical SAM superfamily. MoaA family. As to quaternary structure, monomer and homodimer. Requires [4Fe-4S] cluster as cofactor.

The enzyme catalyses GTP + AH2 + S-adenosyl-L-methionine = (8S)-3',8-cyclo-7,8-dihydroguanosine 5'-triphosphate + 5'-deoxyadenosine + L-methionine + A + H(+). It participates in cofactor biosynthesis; molybdopterin biosynthesis. Its function is as follows. Catalyzes the cyclization of GTP to (8S)-3',8-cyclo-7,8-dihydroguanosine 5'-triphosphate. The sequence is that of GTP 3',8-cyclase from Rhodococcus opacus (strain B4).